A 367-amino-acid polypeptide reads, in one-letter code: C-X-C chemokine receptor type 3 (367 aa).

Topologically, residues 1–56 are extracellular; sequence MYLEVSERQVLDASDIAFLLENSTSPYDYGENESDFSDSPPCPQDFSLNFDRTFLP. An N-linked (GlcNAc...) asparagine glycan is attached at asparagine 22. Tyrosine 27 and tyrosine 29 each carry sulfotyrosine. A glycan (N-linked (GlcNAc...) asparagine) is linked at asparagine 32. The chain crosses the membrane as a helical span at residues 57-77; the sequence is VLYSLLFLLGLLGNGAVAAVL. The Cytoplasmic portion of the chain corresponds to 78–89; it reads LSQRTALSSTDT. A helical membrane pass occupies residues 90–110; that stretch reads FLLHLAVADVLLVLTLPLWAV. Residues 111–125 are Extracellular-facing; that stretch reads DAAAQWVFGSGLCKV. Cysteines 123 and 202 form a disulfide. Residues 126–146 traverse the membrane as a helical segment; the sequence is AGALFNINFYAGAFLLACISF. Residues 147-168 are Cytoplasmic-facing; that stretch reads DRYLSIVHATQIYRRDPWVRVA. Residues 169–189 form a helical membrane-spanning segment; that stretch reads LTCIVVWGLCVLFALPDFIFL. At 190-222 the chain is on the extracellular side; that stretch reads SASHDQRLNATHCQYNFPQVGRTALRVLQLVAG. N-linked (GlcNAc...) asparagine glycosylation is present at asparagine 198. The helical transmembrane segment at 223–243 threads the bilayer; it reads FLMPLLVMAYCYAHILAVLLV. Residues 244-255 are Cytoplasmic-facing; the sequence is SRGQRRFRAMRL. Residues 256–276 form a helical membrane-spanning segment; sequence VVVVVVAFAVCWTPYHLVVLV. Residues 277–300 lie on the Extracellular side of the membrane; it reads DILMDVGVLARNCGRESHVDVAKS. The helical transmembrane segment at 301–321 threads the bilayer; that stretch reads VTSGMGYMHCCLNPLLYAFVG. Topologically, residues 322–367 are cytoplasmic; that stretch reads VKFKEQMWMLLMRLGRSDQRGPQRQPSSSRRESSWSETTEASYLGL. Residues 339–367 are disordered; that stretch reads DQRGPQRQPSSSRRESSWSETTEASYLGL.

The protein belongs to the G-protein coupled receptor 1 family. As to quaternary structure, homomer. Forms heteromers with ACKR4. Interacts with PF4/CXCL4. Sulfation on Tyr-27 and Tyr-29 is essential for CXCL10 binding. In terms of processing, N-glycosylated.

Its subcellular location is the cell membrane. Functionally, receptor for the C-X-C chemokine CXCL9, CXCL10 and CXCL11 and mediates the proliferation, survival and angiogenic activity of mesangial cells through a heterotrimeric G-protein signaling pathway. Probably promotes cell chemotaxis response. Binds to CCL21. Upon activation by PF4, induces activated T-lymphocytes migration mediated via downstream Ras/extracellular signal-regulated kinase (ERK) signaling. The protein is C-X-C chemokine receptor type 3 (Cxcr3) of Rattus norvegicus (Rat).